Consider the following 413-residue polypeptide: MAP kinase-interacting serine/threonine-protein kinase 1 (413 aa).

The tract at residues 1 to 26 is disordered; sequence MGSSEPLPIVDSDKRRKKKRKTRATD. Phosphothreonine; by PAK2 is present on threonine 22. A Phosphoserine; by PAK2 modification is found at serine 27. The 285-residue stretch at 37-321 folds into the Protein kinase domain; it reads QLTSELLGEG…AAQVLQHPWV (285 aa). ATP-binding positions include 43–51 and lysine 66; that span reads LGEGAYAKV. Residue aspartate 158 is the Proton acceptor of the active site. 2 positions are modified to phosphoserine: serine 168 and serine 173. Threonine 197, threonine 202, and threonine 332 each carry phosphothreonine.

Belongs to the protein kinase superfamily. CAMK Ser/Thr protein kinase family. As to quaternary structure, interacts with the C-terminal regions of EIF4G1 and EIF4G2. Also binds to dephosphorylated ERK1 and ERK2, and to the p38 kinases. Mg(2+) serves as cofactor. In terms of processing, dual phosphorylation of Thr-197 and Thr-202 activates the kinase. Phosphorylation of Thr-332 activates the kinase. MAPK3/ERK1 is one of the kinases which activate MKNK1/MNK1. Phosphorylation by PAK2 leads to a reduced phosphorylation of EIF4G1.

The catalysed reaction is L-seryl-[protein] + ATP = O-phospho-L-seryl-[protein] + ADP + H(+). It catalyses the reaction L-threonyl-[protein] + ATP = O-phospho-L-threonyl-[protein] + ADP + H(+). Phosphorylated and activated by the p38 kinases and kinases in the Erk pathway. In terms of biological role, may play a role in the response to environmental stress and cytokines. Appears to regulate translation by phosphorylating EIF4E, thus increasing the affinity of this protein for the 7-methylguanosine-containing mRNA cap. The protein is MAP kinase-interacting serine/threonine-protein kinase 1 (Mknk1) of Rattus norvegicus (Rat).